We begin with the raw amino-acid sequence, 410 residues long: Bifunctional enzyme IspD/IspF (410 aa).

Residues 1–257 (MSHDPVVPSA…AGAGSASSRL (257 aa)) form a 2-C-methyl-D-erythritol 4-phosphate cytidylyltransferase region. The 2-C-methyl-D-erythritol 2,4-cyclodiphosphate synthase stretch occupies residues 258–410 (RSGIGTDVHA…AVATALVERL (153 aa)). A divalent metal cation is bound by residues D264 and H266. Residues 264 to 266 (DVH) and 290 to 291 (HS) contribute to the 4-CDP-2-C-methyl-D-erythritol 2-phosphate site. H298 serves as a coordination point for a divalent metal cation. 4-CDP-2-C-methyl-D-erythritol 2-phosphate contacts are provided by residues 312–314 (DIG), 385–388 (TTTD), F392, and R395.

This sequence in the N-terminal section; belongs to the IspD/TarI cytidylyltransferase family. IspD subfamily. The protein in the C-terminal section; belongs to the IspF family. The cofactor is a divalent metal cation.

It carries out the reaction 2-C-methyl-D-erythritol 4-phosphate + CTP + H(+) = 4-CDP-2-C-methyl-D-erythritol + diphosphate. The catalysed reaction is 4-CDP-2-C-methyl-D-erythritol 2-phosphate = 2-C-methyl-D-erythritol 2,4-cyclic diphosphate + CMP. It participates in isoprenoid biosynthesis; isopentenyl diphosphate biosynthesis via DXP pathway; isopentenyl diphosphate from 1-deoxy-D-xylulose 5-phosphate: step 2/6. Its pathway is isoprenoid biosynthesis; isopentenyl diphosphate biosynthesis via DXP pathway; isopentenyl diphosphate from 1-deoxy-D-xylulose 5-phosphate: step 4/6. In terms of biological role, bifunctional enzyme that catalyzes the formation of 4-diphosphocytidyl-2-C-methyl-D-erythritol from CTP and 2-C-methyl-D-erythritol 4-phosphate (MEP) (IspD), and catalyzes the conversion of 4-diphosphocytidyl-2-C-methyl-D-erythritol 2-phosphate (CDP-ME2P) to 2-C-methyl-D-erythritol 2,4-cyclodiphosphate (ME-CPP) with a corresponding release of cytidine 5-monophosphate (CMP) (IspF). The polypeptide is Bifunctional enzyme IspD/IspF (Clavibacter michiganensis subsp. michiganensis (strain NCPPB 382)).